We begin with the raw amino-acid sequence, 221 residues long: Ras-related protein Rab-28 (221 aa).

At serine 2 the chain carries N-acetylserine. Position 8 is a phosphoserine (serine 8). 9 residues coordinate GTP: glycine 21, glycine 24, lysine 25, threonine 26, serine 27, glycine 38, lysine 39, tyrosine 41, and threonine 44. Threonine 26 lines the Mg(2+) pocket. The interval 35-49 (ETFGKRYKQTIGLDF) is switch I. Mg(2+) contacts are provided by threonine 44 and aspartate 68. A switch II region spans residues 68–85 (DIGGQTIGGKMLDKYIYG). GTP contacts are provided by glycine 71, asparagine 129, lysine 130, aspartate 132, alanine 160, and lysine 161. Residue cysteine 218 is modified to Cysteine methyl ester. Cysteine 218 carries the S-farnesyl cysteine lipid modification. Positions 219 to 221 (AVQ) are cleaved as a propeptide — removed in mature form.

Belongs to the small GTPase superfamily. Rab family. In terms of assembly, interacts (prenylated form) with PDE6D; the interaction promotes RAB28 delivery to the photoreceptor outer segments. Interacts with KCNJ13; the interaction may facilitate cone outer segments phagocytosis. Also participates in nuclear factor kappa-B p65/RELA nuclear transport in endothelial cells. Requires Mg(2+) as cofactor. Post-translationally, isoprenylated.

The protein localises to the cell membrane. The protein resides in the cytoplasm. Its subcellular location is the cytoskeleton. It is found in the cilium basal body. It localises to the nucleus. It catalyses the reaction GTP + H2O = GDP + phosphate + H(+). With respect to regulation, regulated by guanine nucleotide exchange factors (GEFs) which promote the exchange of bound GDP for free GTP. Regulated by GTPase activating proteins (GAPs) which increase the GTP hydrolysis activity. Inhibited by GDP dissociation inhibitors (GDIs). In terms of biological role, the small GTPases Rab are key regulators of intracellular membrane trafficking, from the formation of transport vesicles to their fusion with membranes. Rabs cycle between an inactive GDP-bound form and an active GTP-bound form that is able to recruit to membranes different sets of downstream effectors directly responsible for vesicle formation, movement, tethering and fusion. RAB28 is required for shedding and phagocytosis of cone cell outer segments (OS) discs in the retina. Also participates in nuclear factor kappa-B p65/RELA nuclear transport in endothelial cells. This chain is Ras-related protein Rab-28 (RAB28), found in Pongo abelii (Sumatran orangutan).